A 212-amino-acid polypeptide reads, in one-letter code: Ribonuclease HII (212 aa).

An RNase H type-2 domain is found at 17–211; it reads ANLAGIDEAG…VIEALLSLEQ (195 aa). A divalent metal cation-binding residues include D23, E24, and D120.

It belongs to the RNase HII family. It depends on Mn(2+) as a cofactor. Mg(2+) serves as cofactor.

Its subcellular location is the cytoplasm. It catalyses the reaction Endonucleolytic cleavage to 5'-phosphomonoester.. Its function is as follows. Endonuclease that specifically degrades the RNA of RNA-DNA hybrids. The chain is Ribonuclease HII from Chloroflexus aurantiacus (strain ATCC 29364 / DSM 637 / Y-400-fl).